We begin with the raw amino-acid sequence, 320 residues long: Holliday junction branch migration complex subunit RuvB (320 aa).

Residues 1 to 172 (MTANVCLDES…FGIISRLEYY (172 aa)) form a large ATPase domain (RuvB-L) region. ATP-binding positions include R12, G53, K56, T57, T58, 119–121 (EDF), R162, Y172, and R209. T57 contributes to the Mg(2+) binding site. The small ATPAse domain (RuvB-S) stretch occupies residues 173 to 243 (TPADLARIVA…LASEALGRME (71 aa)). The interval 246–320 (ESGLDQMDRK…KAYRHLNLLG (75 aa)) is head domain (RuvB-H). Positions 301 and 306 each coordinate DNA.

It belongs to the RuvB family. Homohexamer. Forms an RuvA(8)-RuvB(12)-Holliday junction (HJ) complex. HJ DNA is sandwiched between 2 RuvA tetramers; dsDNA enters through RuvA and exits via RuvB. An RuvB hexamer assembles on each DNA strand where it exits the tetramer. Each RuvB hexamer is contacted by two RuvA subunits (via domain III) on 2 adjacent RuvB subunits; this complex drives branch migration. In the full resolvosome a probable DNA-RuvA(4)-RuvB(12)-RuvC(2) complex forms which resolves the HJ.

Its subcellular location is the cytoplasm. It carries out the reaction ATP + H2O = ADP + phosphate + H(+). The RuvA-RuvB-RuvC complex processes Holliday junction (HJ) DNA during genetic recombination and DNA repair, while the RuvA-RuvB complex plays an important role in the rescue of blocked DNA replication forks via replication fork reversal (RFR). RuvA specifically binds to HJ cruciform DNA, conferring on it an open structure. The RuvB hexamer acts as an ATP-dependent pump, pulling dsDNA into and through the RuvAB complex. RuvB forms 2 homohexamers on either side of HJ DNA bound by 1 or 2 RuvA tetramers; 4 subunits per hexamer contact DNA at a time. Coordinated motions by a converter formed by DNA-disengaged RuvB subunits stimulates ATP hydrolysis and nucleotide exchange. Immobilization of the converter enables RuvB to convert the ATP-contained energy into a lever motion, pulling 2 nucleotides of DNA out of the RuvA tetramer per ATP hydrolyzed, thus driving DNA branch migration. The RuvB motors rotate together with the DNA substrate, which together with the progressing nucleotide cycle form the mechanistic basis for DNA recombination by continuous HJ branch migration. Branch migration allows RuvC to scan DNA until it finds its consensus sequence, where it cleaves and resolves cruciform DNA. This chain is Holliday junction branch migration complex subunit RuvB, found in Nitratidesulfovibrio vulgaris (strain ATCC 29579 / DSM 644 / CCUG 34227 / NCIMB 8303 / VKM B-1760 / Hildenborough) (Desulfovibrio vulgaris).